The sequence spans 88 residues: Metastasis-suppressor KiSS-1 (88 aa).

Residues 1-13 show a composition bias toward polar residues; that stretch reads SVENSRPTGQQLE. Residues 1 to 88 are disordered; sequence SVENSRPTGQ…REKDLPNYNW (88 aa). A compositionally biased stretch (low complexity) spans 33 to 55; it reads SATARLSRRGASLSSPAESSGSP. Residues 78-88 show a composition bias toward basic and acidic residues; sequence QREKDLPNYNW. Residue Tyr86 is modified to Phosphotyrosine.

The protein belongs to the KISS1 family. As to expression, in the hypothalamus, expression increases with puberty in both male and female monkeys. Robust expression in the region of the arcuate nucleus (ARC).

The protein resides in the secreted. Metastasis suppressor protein. May regulate events downstream of cell-matrix adhesion, perhaps involving cytoskeletal reorganization. Generates a C-terminally amidated peptide, metastin which functions as the endogenous ligand of the G-protein coupled receptor GPR54. The receptor is essential for normal gonadotropin-released hormone physiology and for puberty. The hypothalamic KiSS1/GPR54 system is a pivotal factor in central regulation of the gonadotropic axis at puberty and in adulthood. This is Metastasis-suppressor KiSS-1 (KISS1) from Macaca mulatta (Rhesus macaque).